Here is a 184-residue protein sequence, read N- to C-terminus: Adenine phosphoribosyltransferase (184 aa).

Belongs to the purine/pyrimidine phosphoribosyltransferase family. Homodimer.

The protein resides in the cytoplasm. It catalyses the reaction AMP + diphosphate = 5-phospho-alpha-D-ribose 1-diphosphate + adenine. Its pathway is purine metabolism; AMP biosynthesis via salvage pathway; AMP from adenine: step 1/1. Its function is as follows. Catalyzes a salvage reaction resulting in the formation of AMP, that is energically less costly than de novo synthesis. The chain is Adenine phosphoribosyltransferase from Sphingopyxis alaskensis (strain DSM 13593 / LMG 18877 / RB2256) (Sphingomonas alaskensis).